We begin with the raw amino-acid sequence, 141 residues long: Hemoglobin subunit alpha-A (141 aa).

Positions valine 1 to arginine 141 constitute a Globin domain. Histidine 58 lines the O2 pocket. Histidine 87 is a binding site for heme b.

This sequence belongs to the globin family. In terms of assembly, heterotetramer of two alpha chains and two beta chains. Red blood cells.

Its function is as follows. Involved in oxygen transport from the lung to the various peripheral tissues. This Francolinus pondicerianus (Grey francolin) protein is Hemoglobin subunit alpha-A (HBAA).